Consider the following 372-residue polypeptide: Glutamate 5-kinase (372 aa).

Lys-14 lines the ATP pocket. The substrate site is built by Ser-54, Asp-141, and Asn-153. 173-174 (TD) contacts ATP. One can recognise a PUA domain in the interval 280-358 (RGHVVIDDGA…GEIESVLGYM (79 aa)).

Belongs to the glutamate 5-kinase family.

It localises to the cytoplasm. It carries out the reaction L-glutamate + ATP = L-glutamyl 5-phosphate + ADP. Its pathway is amino-acid biosynthesis; L-proline biosynthesis; L-glutamate 5-semialdehyde from L-glutamate: step 1/2. In terms of biological role, catalyzes the transfer of a phosphate group to glutamate to form L-glutamate 5-phosphate. The sequence is that of Glutamate 5-kinase from Paraburkholderia phymatum (strain DSM 17167 / CIP 108236 / LMG 21445 / STM815) (Burkholderia phymatum).